The primary structure comprises 447 residues: UDP-glucosyl transferase 79T1 (447 aa).

The active-site Proton acceptor is His18. The Charge relay role is filled by Asp116. The UDP site is built by Ser265, Trp323, Val324, His341, Thr346, and Glu349.

Belongs to the UDP-glycosyltransferase family. Mainly expressed in flowers, flower buds and young leaves, and, to a lesser extent, in old leaves, stems and roots.

Its pathway is secondary metabolite biosynthesis; terpenoid biosynthesis. In terms of biological role, component of the oleanane-type triterpene saponins (e.g. saponarioside A and saponarioside B) biosynthetic pathway, leading to the production of natural products with detergent properties used as traditional sources of soap. A glycosyltransferase that mediates the conversion of QA-triF to QA-triFR via the elongation of the C-28 sugar chain with a deoxyhexose on the D-fucose moiety. The polypeptide is UDP-glucosyl transferase 79T1 (Saponaria officinalis (Common soapwort)).